The sequence spans 127 residues: Protein ApaG (127 aa).

The region spanning 3–127 (DADVYAISVE…FVLAIPRTLH (125 aa)) is the ApaG domain.

The sequence is that of Protein ApaG from Stenotrophomonas maltophilia (strain K279a).